A 763-amino-acid chain; its full sequence is Elongation factor G, mitochondrial (763 aa).

The transit peptide at 1–52 (MFMRLKVLEMNSIRRQTLLRQFTNVYNVVSRSARLCSQAIPKRLFYSTGSRA) directs the protein to the mitochondrion. The region spanning 60–347 (SRLRNIGISA…AVCDYLPNPS (288 aa)) is the tr-type G domain. Residues 69–76 (AHIDSGKT), 145–149 (DTPGH), and 199–202 (NKMD) contribute to the GTP site.

Belongs to the TRAFAC class translation factor GTPase superfamily. Classic translation factor GTPase family. EF-G/EF-2 subfamily.

Its subcellular location is the mitochondrion. It functions in the pathway protein biosynthesis; polypeptide chain elongation. Functionally, mitochondrial GTPase that catalyzes the GTP-dependent ribosomal translocation step during translation elongation. During this step, the ribosome changes from the pre-translocational (PRE) to the post-translocational (POST) state as the newly formed A-site-bound peptidyl-tRNA and P-site-bound deacylated tRNA move to the P and E sites, respectively. Catalyzes the coordinated movement of the two tRNA molecules, the mRNA and conformational changes in the ribosome. This Schizosaccharomyces japonicus (strain yFS275 / FY16936) (Fission yeast) protein is Elongation factor G, mitochondrial (mef1).